The chain runs to 795 residues: Phenylalanine--tRNA ligase beta subunit (795 aa).

One can recognise a tRNA-binding domain in the interval 39–148 (AGSFNGVVVG…ADAPLGTDIR (110 aa)). The 76-residue stretch at 401-476 (PKRATITLRR…RVYGYNNIPD (76 aa)) folds into the B5 domain. Asp454, Asp460, Glu463, and Glu464 together coordinate Mg(2+). In terms of domain architecture, FDX-ACB spans 701-794 (SRFPANRRDI…LKERFQASLR (94 aa)).

It belongs to the phenylalanyl-tRNA synthetase beta subunit family. Type 1 subfamily. As to quaternary structure, tetramer of two alpha and two beta subunits. Requires Mg(2+) as cofactor.

The protein localises to the cytoplasm. The catalysed reaction is tRNA(Phe) + L-phenylalanine + ATP = L-phenylalanyl-tRNA(Phe) + AMP + diphosphate + H(+). This is Phenylalanine--tRNA ligase beta subunit from Salmonella paratyphi A (strain ATCC 9150 / SARB42).